The primary structure comprises 237 residues: UPF0173 metal-dependent hydrolase HQ_3368A (237 aa).

The protein belongs to the UPF0173 family.

The polypeptide is UPF0173 metal-dependent hydrolase HQ_3368A (Haloquadratum walsbyi (strain DSM 16790 / HBSQ001)).